We begin with the raw amino-acid sequence, 122 residues long: MKKKDTCEIFCYDEEKVNRIQGDLQTVDISGVSQILKAIADENRAKITYALCQDEELCVCDIANILGVTIANASHHLRTLYKQGVVNFRKEGKLALYSLGDEHIRQIMMIALAHKKEVKVNV.

Residues Cys-7, Cys-11, Cys-58, and Cys-60 each contribute to the Cd(2+) site. One can recognise an HTH arsR-type domain in the interval 24–119 (LQTVDISGVS…IALAHKKEVK (96 aa)). A DNA-binding region (H-T-H motif) is located at residues 59–78 (VCDIANILGVTIANASHHLR). Zn(2+) contacts are provided by Asp-101, His-103, His-114, and Glu-117.

As to quaternary structure, homodimer.

Its function is as follows. Metal-binding repressor for the cad operon. Involved in resistance to heavy metals, such as cadmium, bismuth, zinc or lead. Binds 2 metal ions per subunit. Metal binding to the N-terminal regulatory site causes the repressor to dissociate from the DNA. This Staphylococcus aureus protein is Cadmium resistance transcriptional regulatory protein CadC (cadC).